A 313-amino-acid polypeptide reads, in one-letter code: Ketimine reductase mu-crystallin (313 aa).

Arg47 is a binding site for 3,3',5-triiodo-L-thyronine. Ser90, His91, Arg118, Ala143, Val145, Gln146, Asn167, Arg168, Thr169, Asn172, Thr204, Met205, and Val225 together coordinate NADPH. Residue Glu256 participates in 3,3',5-triiodo-L-thyronine binding. Position 291 (Ser291) interacts with NADPH.

This sequence belongs to the ornithine cyclodeaminase/mu-crystallin family. Homodimer. Binds the thyroid hormone triiodothyronine (T3); T3 binding inhibits enzymatic activity. As to expression, expressed in the spiral ligament of the cochlea (at protein level).

It localises to the cytoplasm. It carries out the reaction L-pipecolate + NADP(+) = Delta(1)-piperideine-2-carboxylate + NADPH + H(+). The enzyme catalyses L-pipecolate + NAD(+) = Delta(1)-piperideine-2-carboxylate + NADH + H(+). The catalysed reaction is L-proline + NADP(+) = 1-pyrroline-2-carboxylate + NADPH + H(+). It catalyses the reaction L-proline + NAD(+) = 1-pyrroline-2-carboxylate + NADH + H(+). It carries out the reaction (3R)-1,4-thiomorpholine-3-carboxylate + NAD(+) = 3,4-dehydrothiomorpholine-3-carboxylate + NADH + 2 H(+). The enzyme catalyses (3R)-1,4-thiomorpholine-3-carboxylate + NADP(+) = 3,4-dehydrothiomorpholine-3-carboxylate + NADPH + 2 H(+). The catalysed reaction is (S)-cystathionine ketimine + NADH + 2 H(+) = (3R,5S)-2,3,5,6,7-pentahydro-1,4-thiazepine-3,5-dicarboxylate + NAD(+). It catalyses the reaction (S)-cystathionine ketimine + NADPH + 2 H(+) = (3R,5S)-2,3,5,6,7-pentahydro-1,4-thiazepine-3,5-dicarboxylate + NADP(+). It carries out the reaction (R)-lanthionine ketimine + NADPH + 2 H(+) = (3R,5R)-1,4-thiomorpholine-3,5-dicarboxylate + NADP(+). The enzyme catalyses Delta(2)-thiazoline-2-carboxylate + NADPH + 2 H(+) = L-thiazolidine-2-carboxylate + NADP(+). In terms of biological role, catalyzes the NAD(P)H-dependent reduction of imine double bonds of a number of cyclic ketimine substrates, including sulfur-containing cyclic ketimines. Under physiological conditions, it efficiently catalyzes delta(1)-piperideine-2-carboxylate (P2C) and delta(1)-pyrroline-2-carboxylate (Pyr2C) reduction, suggesting a central role in lysine and glutamate metabolism. Additional substrates are delta(2)-thiazoline-2-carboxylate (T2C), 3,4-dehydrothiomorpholine-3-carboxylate (AECK), and (R)-lanthionine ketimine (LK) that is reduced at very low rate compared to other substrates. Also catalyzes the NAD(P)H-dependent reduction of (S)-cystathionine ketimine (CysK). This chain is Ketimine reductase mu-crystallin, found in Mus musculus (Mouse).